The primary structure comprises 323 residues: Cell division protein ZipA (323 aa).

Over 1–4 (MDLN) the chain is Periplasmic. The chain crosses the membrane as a helical span at residues 5 to 25 (TILIILGIIALIILVVHGLWA). The Cytoplasmic segment spans residues 26 to 323 (NRREKSQYFK…AEKAYLDKVR (298 aa)). The disordered stretch occupies residues 44-73 (SRLREPPAHIQSASEEKKDANTSTPTAEVS).

The protein belongs to the ZipA family. Interacts with FtsZ via their C-terminal domains.

Its subcellular location is the cell inner membrane. Essential cell division protein that stabilizes the FtsZ protofilaments by cross-linking them and that serves as a cytoplasmic membrane anchor for the Z ring. Also required for the recruitment to the septal ring of downstream cell division proteins. This is Cell division protein ZipA from Pasteurella multocida (strain Pm70).